A 324-amino-acid polypeptide reads, in one-letter code: MKFGLFFLNFINSTTVQEQSIVRMQEITEYVDKLNFEQILVYENHFSGNGVVGAPLTVSGFLLGLTEKIKIGSLNHIITTHHPVRIAEEACLLDQLSEGRFILGFSDCEKKDEMRLFNRPVEYQQQLFEECYEIINDALTTGYCNPDNDFYSFPKISVNPHAYTQGGPRRYVTATSHHIVEWAAKKGIPLIFKWDDSNDVRYEYAERYKAVADKYGIDLSAIDHQLMVLVNYNEDSHKAKQETRAFIRDYVLEMYPNENLENKLEEIITENAVGDYTECIAAAKLAIEKCGAKSVLLSFEPMNDLMHQKNVINIVNDNIKKYHM.

The protein belongs to the bacterial luciferase oxidoreductase family. Heterodimer of an alpha and a beta chain.

The catalysed reaction is a long-chain fatty aldehyde + FMNH2 + O2 = a long-chain fatty acid + hnu + FMN + H2O + 2 H(+). In terms of biological role, light-emitting reaction in luminous bacteria. The specific role of the beta subunit is unknown, but it is absolutely required for bioluminescence activity. In Photorhabdus laumondii subsp. laumondii (strain DSM 15139 / CIP 105565 / TT01) (Photorhabdus luminescens subsp. laumondii), this protein is Alkanal monooxygenase beta chain (luxB).